The primary structure comprises 42 residues: Photosystem I reaction center subunit IX (42 aa).

Residues 7 to 27 (YLSVAPVLSTLWFGALAGLLI) traverse the membrane as a helical segment.

Belongs to the PsaJ family.

The protein localises to the plastid. It localises to the chloroplast thylakoid membrane. May help in the organization of the PsaE and PsaF subunits. The protein is Photosystem I reaction center subunit IX of Guizotia abyssinica (Niger).